Consider the following 297-residue polypeptide: Proline iminopeptidase (297 aa).

Residues 26–131 enclose the AB hydrolase-1 domain; sequence VLLLHGGPAM…GLLVSNMMAS (106 aa). The Nucleophile role is filled by S103. Residue D243 is part of the active site. Catalysis depends on H270, which acts as the Proton donor.

The protein belongs to the peptidase S33 family. Monomer.

The enzyme catalyses Release of N-terminal proline from a peptide.. Functionally, releases the N-terminal proline from various substrates. The chain is Proline iminopeptidase (fpaP) from Flavobacterium johnsoniae (strain ATCC 17061 / DSM 2064 / JCM 8514 / BCRC 14874 / CCUG 350202 / NBRC 14942 / NCIMB 11054 / UW101) (Cytophaga johnsonae).